The chain runs to 544 residues: MAKQLLFNEEARKSLLAGVEQISNAVKVTLGPKGRNVLIDKSFGAPTVTKDGVSVAREVELENKFENMGAQLLKEVATKTNDVAGDGTTTATVLAYSMVKEGLKAVAAGMTPLELKRGIDKAVAIAVEDIQKNSKEIKGSEEVAHVASVSANNDAEIGKIIADAIAKVGKDGVIDVGEAQTMETVTDYVEGMQFDRGYISSYFVTDRDRMETVFENPYILIYDKSISTMKDLLPLLEQVAQSGRPLLIIAEDVEGEALATLVVNSLRGALKTCAVKAPGFGDRRKEMLEDIAVLTGGQVVSEELGFKLEAAQISMLGQAKSIKIDKDNTMIIDGAGKSKDIKDRVTQIKAQLDATDSEYDSEKLRERLAKLSGGVAVIKIGAVTEVEMKEKKHRVEDALSATRAAIEEGIVAGGGLAMIQAIAALEKADMSSLTEDEKVGFKIVKRALEEPIRQIAENAGLDGAVIAEKAKEKKGVGFDAAKMEWTDMVKAGIIDPAKVTRSALQNAASIASLLLTTECAITDIPEKQAGPAMPSPDMGGMGMY.

Residues T29–P32, K50, D86–T90, G414, D479–A481, and D495 contribute to the ATP site.

This sequence belongs to the chaperonin (HSP60) family. Forms a cylinder of 14 subunits composed of two heptameric rings stacked back-to-back. Interacts with the co-chaperonin GroES.

It is found in the cytoplasm. It catalyses the reaction ATP + H2O + a folded polypeptide = ADP + phosphate + an unfolded polypeptide.. Functionally, together with its co-chaperonin GroES, plays an essential role in assisting protein folding. The GroEL-GroES system forms a nano-cage that allows encapsulation of the non-native substrate proteins and provides a physical environment optimized to promote and accelerate protein folding. The protein is Chaperonin GroEL of Treponema denticola (strain ATCC 35405 / DSM 14222 / CIP 103919 / JCM 8153 / KCTC 15104).